The primary structure comprises 99 residues: Ubiquitin-related modifier 1 homolog (99 aa).

G99 carries the 1-thioglycine modification. G99 participates in a covalent cross-link: Glycyl lysine isopeptide (Gly-Lys) (interchain with K-? in acceptor proteins).

Belongs to the URM1 family. In terms of processing, C-terminal thiocarboxylation occurs in 2 steps, it is first acyl-adenylated (-COAMP) via the hesA/moeB/thiF part of the MOCS3 homolog, then thiocarboxylated (-COSH) via the rhodanese domain of the MOCS3 homolog.

The protein localises to the cytoplasm. It participates in tRNA modification; 5-methoxycarbonylmethyl-2-thiouridine-tRNA biosynthesis. Its function is as follows. Acts as a sulfur carrier required for 2-thiolation of mcm(5)S(2)U at tRNA wobble positions of cytosolic tRNA(Lys), tRNA(Glu) and tRNA(Gln). Serves as sulfur donor in tRNA 2-thiolation reaction by being thiocarboxylated (-COSH) at its C-terminus by MOCS3. The sulfur is then transferred to tRNA to form 2-thiolation of mcm(5)S(2)U. Also acts as a ubiquitin-like protein (UBL) that is covalently conjugated via an isopeptide bond to lysine residues of target proteins. The thiocarboxylated form serves as substrate for conjugation and oxidative stress specifically induces the formation of UBL-protein conjugates. The protein is Ubiquitin-related modifier 1 homolog of Chlamydomonas reinhardtii (Chlamydomonas smithii).